Consider the following 320-residue polypeptide: Mycothiol acetyltransferase (320 aa).

N-acetyltransferase domains are found at residues 16–141 (RQVR…RSLR) and 152–320 (LQIR…AALA). Glutamate 36 contacts 1D-myo-inositol 2-(L-cysteinylamino)-2-deoxy-alpha-D-glucopyranoside. Acetyl-CoA contacts are provided by residues 80-82 (LVV) and 88-93 (RRGIAT). 1D-myo-inositol 2-(L-cysteinylamino)-2-deoxy-alpha-D-glucopyranoside is bound by residues glutamate 179, lysine 229, and glutamate 239. Residues 243-245 (LGV) and 250-256 (QGRGLGR) contribute to the acetyl-CoA site. Tyrosine 284 serves as a coordination point for 1D-myo-inositol 2-(L-cysteinylamino)-2-deoxy-alpha-D-glucopyranoside. 289–294 (NIAAVR) contacts acetyl-CoA.

It belongs to the acetyltransferase family. MshD subfamily. Monomer.

The enzyme catalyses 1D-myo-inositol 2-(L-cysteinylamino)-2-deoxy-alpha-D-glucopyranoside + acetyl-CoA = mycothiol + CoA + H(+). In terms of biological role, catalyzes the transfer of acetyl from acetyl-CoA to desacetylmycothiol (Cys-GlcN-Ins) to form mycothiol. The protein is Mycothiol acetyltransferase of Mycobacterium marinum (strain ATCC BAA-535 / M).